Here is a 162-residue protein sequence, read N- to C-terminus: Transcription elongation factor GreA (162 aa).

A coiled-coil region spans residues 45 to 74 (ENAEYEAAREKQAFIEGRIKELEDMTARAE).

Belongs to the GreA/GreB family.

Its function is as follows. Necessary for efficient RNA polymerase transcription elongation past template-encoded arresting sites. The arresting sites in DNA have the property of trapping a certain fraction of elongating RNA polymerases that pass through, resulting in locked ternary complexes. Cleavage of the nascent transcript by cleavage factors such as GreA or GreB allows the resumption of elongation from the new 3'terminus. GreA releases sequences of 2 to 3 nucleotides. The sequence is that of Transcription elongation factor GreA from Rickettsia conorii (strain ATCC VR-613 / Malish 7).